Reading from the N-terminus, the 124-residue chain is MEKNELKVIRGKPEQQKMDISTVEVKNNNIEKLKIGCEAKKTTDRVENSGNGTGSISAPLTDLGPSIGDSHENKGADIPIHPPLDTQSHAKDDDWYDILVITADYEFPKNPANEDVKEERTQGD.

Residues 44–92 form a disordered region; sequence DRVENSGNGTGSISAPLTDLGPSIGDSHENKGADIPIHPPLDTQSHAKD. Residues 48–58 are compositionally biased toward polar residues; that stretch reads NSGNGTGSISA.

This is an uncharacterized protein from Caenorhabditis elegans.